The chain runs to 541 residues: Chaperonin GroEL 2 (541 aa).

Residues 29-32 (TLGP), 86-90 (DGTTT), Gly-414, 478-480 (DAA), and Asp-494 contribute to the ATP site.

This sequence belongs to the chaperonin (HSP60) family. In terms of assembly, forms a cylinder of 14 subunits composed of two heptameric rings stacked back-to-back. Interacts with the co-chaperonin GroES.

The protein resides in the cytoplasm. The enzyme catalyses ATP + H2O + a folded polypeptide = ADP + phosphate + an unfolded polypeptide.. Functionally, together with its co-chaperonin GroES, plays an essential role in assisting protein folding. The GroEL-GroES system forms a nano-cage that allows encapsulation of the non-native substrate proteins and provides a physical environment optimized to promote and accelerate protein folding. This Frankia casuarinae (strain DSM 45818 / CECT 9043 / HFP020203 / CcI3) protein is Chaperonin GroEL 2.